Here is a 178-residue protein sequence, read N- to C-terminus: Ribosome maturation factor RimM (178 aa).

In terms of domain architecture, PRC barrel spans 104-177; sequence SDEYYFYEVI…KIVVKLPEWL (74 aa).

It belongs to the RimM family. In terms of assembly, binds ribosomal protein uS19.

The protein resides in the cytoplasm. An accessory protein needed during the final step in the assembly of 30S ribosomal subunit, possibly for assembly of the head region. Essential for efficient processing of 16S rRNA. May be needed both before and after RbfA during the maturation of 16S rRNA. It has affinity for free ribosomal 30S subunits but not for 70S ribosomes. The polypeptide is Ribosome maturation factor RimM (Thermosipho melanesiensis (strain DSM 12029 / CIP 104789 / BI429)).